The sequence spans 340 residues: Ketol-acid reductoisomerase (NADP(+)) (340 aa).

The 181-residue stretch at 3 to 183 folds into the KARI N-terminal Rossmann domain; it reads LPIYYDKDCD…GGGRTGIIHT (181 aa). NADP(+) is bound by residues 26-29, Ser54, and 84-87; these read FGSQ and DEIQ. His109 is a catalytic residue. Gly135 is a binding site for NADP(+). The region spanning 184–329 is the KARI C-terminal knotted domain; it reads TFKDETETDL…KRLRAMMPWI (146 aa). Asp192, Glu196, Glu228, and Glu232 together coordinate Mg(2+). Ser253 provides a ligand contact to substrate.

The protein belongs to the ketol-acid reductoisomerase family. Requires Mg(2+) as cofactor.

The catalysed reaction is (2R)-2,3-dihydroxy-3-methylbutanoate + NADP(+) = (2S)-2-acetolactate + NADPH + H(+). It carries out the reaction (2R,3R)-2,3-dihydroxy-3-methylpentanoate + NADP(+) = (S)-2-ethyl-2-hydroxy-3-oxobutanoate + NADPH + H(+). It participates in amino-acid biosynthesis; L-isoleucine biosynthesis; L-isoleucine from 2-oxobutanoate: step 2/4. The protein operates within amino-acid biosynthesis; L-valine biosynthesis; L-valine from pyruvate: step 2/4. Functionally, involved in the biosynthesis of branched-chain amino acids (BCAA). Catalyzes an alkyl-migration followed by a ketol-acid reduction of (S)-2-acetolactate (S2AL) to yield (R)-2,3-dihydroxy-isovalerate. In the isomerase reaction, S2AL is rearranged via a Mg-dependent methyl migration to produce 3-hydroxy-3-methyl-2-ketobutyrate (HMKB). In the reductase reaction, this 2-ketoacid undergoes a metal-dependent reduction by NADPH to yield (R)-2,3-dihydroxy-isovalerate. This chain is Ketol-acid reductoisomerase (NADP(+)), found in Nitratiruptor sp. (strain SB155-2).